The sequence spans 475 residues: MGWNGGLTSPSMEEHFYPFLMERSPSYMGEDEEEHGDEDLSLVLERKDKDLLLAAELGKALLERNDQLMKAKDALEEELRETLEMIEQEKHNMRLKMEVQESEWRAQVADLESDLAEARLQMQQLLSEQRECGRESASAVQELSEQNQRLVEQLAQASQVEQAITLEMKSLKEENRDLTISRGQFAPCLQSLRSENALLLEKKKEMESQTKQLQEENDNVQNQLISAKEGVFQLQRQKEDAKSQVLQLELEAQKLRDSQRTLQLQLKELQDELHMRDSQFSMRGTHSSLHSEIQQSTAVQNHEKGRNSAETQSITSGYMDTYLTEREGDLLRENEEQTVRLQDQVTMQHIEITDLRKEVQRLKDLLQQNNADSTVKQAVLDRDEALMKKAELEQELARCQIEKESLNLQLLSTIQQKVMLSQELEAWQDDMQIVINQQLQSQKQQETQKPPESPQNSFLRRDSKRGKILSFFKNI.

The stretch at 56-275 (ELGKALLERN…LKELQDELHM (220 aa)) forms a coiled coil. Polar residues-rich tracts occupy residues 286–300 (HSSL…TAVQ) and 308–318 (SAETQSITSGY). A disordered region spans residues 286–318 (HSSLHSEIQQSTAVQNHEKGRNSAETQSITSGY). The stretch at 340–413 (RLQDQVTMQH…ESLNLQLLST (74 aa)) forms a coiled coil. The segment covering 440-450 (QSQKQQETQKP) has biased composition (low complexity). The segment at 440–459 (QSQKQQETQKPPESPQNSFL) is disordered.

It belongs to the BICDR family.

In Xenopus tropicalis (Western clawed frog), this protein is BICD family-like cargo adapter 2 (bicdl2).